Here is a 411-residue protein sequence, read N- to C-terminus: Trigger factor (411 aa).

Residues 162-240 (EDLVVIDYTT…IKEVKRRQNI (79 aa)) enclose the PPIase FKBP-type domain.

This sequence belongs to the FKBP-type PPIase family. Tig subfamily.

The protein resides in the cytoplasm. It carries out the reaction [protein]-peptidylproline (omega=180) = [protein]-peptidylproline (omega=0). In terms of biological role, involved in protein export. Acts as a chaperone by maintaining the newly synthesized protein in an open conformation. Functions as a peptidyl-prolyl cis-trans isomerase. This is Trigger factor from Thermodesulfovibrio yellowstonii (strain ATCC 51303 / DSM 11347 / YP87).